A 1180-amino-acid chain; its full sequence is DNA-directed RNA polymerase subunit beta (1180 aa).

Positions 1154–1164 are enriched in acidic residues; that stretch reads EMKELDDEDEQ. Residues 1154–1180 are disordered; it reads EMKELDDEDEQASDKLNLNIDSTESNV. A compositionally biased stretch (polar residues) spans 1167-1180; that stretch reads DKLNLNIDSTESNV.

It belongs to the RNA polymerase beta chain family. The RNAP catalytic core consists of 2 alpha, 1 beta, 1 beta' and 1 omega subunit. When a sigma factor is associated with the core the holoenzyme is formed, which can initiate transcription.

The enzyme catalyses RNA(n) + a ribonucleoside 5'-triphosphate = RNA(n+1) + diphosphate. DNA-dependent RNA polymerase catalyzes the transcription of DNA into RNA using the four ribonucleoside triphosphates as substrates. The polypeptide is DNA-directed RNA polymerase subunit beta (Halalkalibacterium halodurans (strain ATCC BAA-125 / DSM 18197 / FERM 7344 / JCM 9153 / C-125) (Bacillus halodurans)).